The primary structure comprises 219 residues: Ribose-5-phosphate isomerase A (219 aa).

Substrate-binding positions include 28–31 (TGST), 81–84 (DGAD), and 94–97 (KGGG). The active-site Proton acceptor is Glu-103. Position 121 (Lys-121) interacts with substrate.

The protein belongs to the ribose 5-phosphate isomerase family. Homodimer.

The enzyme catalyses aldehydo-D-ribose 5-phosphate = D-ribulose 5-phosphate. Its pathway is carbohydrate degradation; pentose phosphate pathway; D-ribose 5-phosphate from D-ribulose 5-phosphate (non-oxidative stage): step 1/1. Functionally, catalyzes the reversible conversion of ribose-5-phosphate to ribulose 5-phosphate. The sequence is that of Ribose-5-phosphate isomerase A from Salmonella arizonae (strain ATCC BAA-731 / CDC346-86 / RSK2980).